The primary structure comprises 101 residues: Long chronological lifespan protein 1 (101 aa).

An N-terminal signal peptide occupies residues 1 to 17 (MKNAALCEALPLLATCS). Residue serine 81 is the site of GPI-anchor amidated serine attachment. A propeptide spans 82-101 (FAKPSFSFFFFLLTSLLSPF) (removed in mature form).

It is found in the cell membrane. This chain is Long chronological lifespan protein 1 (LCL1), found in Saccharomyces cerevisiae (strain ATCC 204508 / S288c) (Baker's yeast).